The primary structure comprises 172 residues: Myosin regulatory light polypeptide 9 (172 aa).

Positions 1 to 16 are enriched in basic residues; that stretch reads MSSKRAKTKTTKKRPQ. The interval 1-20 is disordered; that stretch reads MSSKRAKTKTTKKRPQRATS. Ser2 bears the N-acetylserine mark. At Thr19 the chain carries Phosphothreonine; by MLCK, CIT and ROCK2. At Ser20 the chain carries Phosphoserine; by CDC42BP, CIT, MLCK, PAK1, ROCK1, ROCK2, DAPK1, DAPK2 and ZIPK/DAPK3. EF-hand domains are found at residues 29–64, 98–133, and 134–169; these read SQIQEFKEAFNMIDQNRDGFIDKEDLHDMLASLGKN, DPEDVIRNAFACFDEEATGTIQEDYLRELLTTMGDR, and FTDEEVDELYREAPIDKKGNFNYIEFTRILKHGAKD. Ca(2+)-binding residues include Asp42, Asn44, Asp46, and Asp53.

Myosin is a hexamer of 2 heavy chains and 4 light chains: interacts with myosin heavy chain MYO19. Interacts with LUZP1; the interaction results in inhibition of phosphorylation of MYL9 by DAPK3. In terms of processing, phosphorylation increases the actin-activated myosin ATPase activity and thereby regulates the contractile activity. It is required to generate the driving force in the migration of the cells but not necessary for localization of myosin-2 at the leading edge. Phosphorylation is required for myotube formation. Phosphorylated by DAPK3; DAPK3-mediated phosphorylation is inhibited by LUZP1.

It localises to the cytoplasm. Its subcellular location is the cytoskeleton. The protein resides in the cell cortex. In terms of biological role, myosin regulatory subunit that plays an important role in regulation of both smooth muscle and nonmuscle cell contractile activity via its phosphorylation. Implicated in cytokinesis, receptor capping, and cell locomotion. In myoblasts, may regulate PIEZO1-dependent cortical actomyosin assembly involved in myotube formation. This chain is Myosin regulatory light polypeptide 9 (MYL9), found in Bos taurus (Bovine).